The primary structure comprises 192 residues: 3-hydroxyanthranilate 3,4-dioxygenase (192 aa).

An O2-binding site is contributed by Arg-50. Fe cation contacts are provided by His-54, Glu-60, and His-102. A substrate-binding site is contributed by Glu-60. Substrate contacts are provided by Arg-106 and Glu-116. A divalent metal cation is bound by residues Cys-131, Cys-134, Cys-168, and Cys-171.

It belongs to the 3-HAO family. Requires Fe(2+) as cofactor.

It localises to the cytoplasm. The enzyme catalyses 3-hydroxyanthranilate + O2 = (2Z,4Z)-2-amino-3-carboxymuconate 6-semialdehyde. It participates in cofactor biosynthesis; NAD(+) biosynthesis; quinolinate from L-kynurenine: step 3/3. Functionally, catalyzes the oxidative ring opening of 3-hydroxyanthranilate to 2-amino-3-carboxymuconate semialdehyde, which spontaneously cyclizes to quinolinate. The protein is 3-hydroxyanthranilate 3,4-dioxygenase (bna1) of Neosartorya fischeri (strain ATCC 1020 / DSM 3700 / CBS 544.65 / FGSC A1164 / JCM 1740 / NRRL 181 / WB 181) (Aspergillus fischerianus).